Here is a 566-residue protein sequence, read N- to C-terminus: MADAAIHGHEHDRRGFFTRWFMSTNHKDIGVLYLFTGGLVGLISVAFTVYMRMELMAPGVQFMCAEHLESGLVKGFFQSLWPSAVENCTPNGHLWNVMITGHGILMMFFVVIPALFGGFGNYFMPLHIGAPDMAFPRMNNLSYWLYVAGTSLAVASLFAPGGNGQLGSGIGWVLYPPLSTSESGYSTDLAIFAVHLSGASSILGAINMITTFLNMRAPGMTMHKVPLFAWSIFVTAWLILLALPVLAGAITMLLTDRNFGTTFFQPSGGGDPVLYQHILWFFGHPEVYIIVLPAFGIVSHVIATFAKKPIFGYLPMVYAMVAIGVLGFVVWAHHMYTAGLSLTQQSYFMMATMVIAVPTGIKIFSWIATMWGGSIELKTPMLWALGFLFLFTVGGVTGIVLSQASVDRYYHDTYYVVAHFHYVMSLGAVFGIFAGIYFWIGKMSGRQYPEWAGKLHFWMMFVGANLTFFPQHFLGRQGMPRRYIDYPEAFATWNFVSSLGAFLSFASFLFFLGVIFYTLTRGARVTANNYWNEHADTLEWTLTSPPPEHTFEQLPKREDWERAPAH.

Transmembrane regions (helical) follow at residues 29–49 (IGVL…AFTV), 97–117 (VMIT…ALFG), 141–161 (LSYW…FAPG), 189–209 (LAIF…INMI), 227–247 (LFAW…PVLA), 278–298 (ILWF…FGIV), and 310–330 (IFGY…GFVV). Histidine 102 lines the Fe(II)-heme a pocket. Positions 284 and 288 each coordinate Cu cation. Residues 284–288 (HPEVY) constitute a cross-link (1'-histidyl-3'-tyrosine (His-Tyr)). Cu cation is bound by residues histidine 333 and histidine 334. 2 helical membrane passes run 348–368 (FMMA…SWIA) and 381–401 (MLWA…GIVL). Heme a3 is bound at residue histidine 419. A run of 3 helical transmembrane segments spans residues 420–440 (FHYV…YFWI), 455–475 (LHFW…HFLG), and 499–519 (LGAF…FYTL). Histidine 421 contributes to the Fe(II)-heme a binding site. Residues 543 to 566 (TSPPPEHTFEQLPKREDWERAPAH) are disordered. Over residues 549-566 (HTFEQLPKREDWERAPAH) the composition is skewed to basic and acidic residues.

It belongs to the heme-copper respiratory oxidase family. Requires Cu(2+) as cofactor. The cofactor is heme.

It is found in the cell membrane. The catalysed reaction is 4 Fe(II)-[cytochrome c] + O2 + 8 H(+)(in) = 4 Fe(III)-[cytochrome c] + 2 H2O + 4 H(+)(out). It functions in the pathway energy metabolism; oxidative phosphorylation. In terms of biological role, cytochrome c oxidase is the component of the respiratory chain that catalyzes the reduction of oxygen to water. Subunits 1-3 form the functional core of the enzyme complex. Co I is the catalytic subunit of the enzyme. Electrons originating in cytochrome c are transferred via the copper A center of subunit 2 and heme a of subunit 1 to the bimetallic center formed by heme a3 and copper B. This cytochrome c oxidase shows proton pump activity across the membrane in addition to the electron transfer. The protein is Cytochrome c oxidase subunit 1 (ctaD) of Cereibacter sphaeroides (Rhodobacter sphaeroides).